Consider the following 1679-residue polypeptide: AF4/FMR2 family member lilli (1679 aa).

8 disordered regions span residues 1-21 (MAQQ…SSIN), 55-78 (NYNM…QQGI), 124-305 (RSAP…EKDV), 406-539 (LHQL…GAQN), 580-609 (MGAG…SNKW), 733-755 (DSGT…AVGG), 783-1172 (QPTQ…TTPH), and 1197-1319 (TPAQ…LQIG). The segment covering 69–78 (REKIERQQGI) has biased composition (basic and acidic residues). Composition is skewed to low complexity over residues 144–181 (SLGH…QQQQ) and 212–244 (PSSS…SSGG). Residue Thr-421 is modified to Phosphothreonine. Residues 429 to 442 (LKTEKNHSLEKQDS) are compositionally biased toward basic and acidic residues. Residues 444 to 455 (LENDLELSESED) show a composition bias toward acidic residues. A phosphoserine mark is found at Ser-451 and Ser-453. The segment covering 464 to 484 (SAGNSSNSSESDSSESGSESS) has biased composition (low complexity). Residues 492–501 (HPNHQQHHHQ) are compositionally biased toward basic residues. The segment covering 502-532 (LQQQQQQQQQQASMQQQQVLQQQQQHRPQPL) has biased composition (low complexity). Over residues 582–591 (AGSGSGGTLS) the composition is skewed to gly residues. The span at 598–609 (NKTPSPTESNKW) shows a compositional bias: polar residues. Over residues 733–752 (DSGTSASGSSSSSSSSSDSA) the composition is skewed to low complexity. Residues 783 to 796 (QPTQSQKAPPSNSV) are compositionally biased toward polar residues. Residues 810–820 (QRQKKPRKKKA) show a composition bias toward basic residues. A phosphoserine mark is found at Ser-829 and Ser-830. Residues 859–871 (KKGRGRPRKQQQS) constitute a DNA-binding region (a.T hook). Low complexity predominate over residues 868-906 (QQQSGGSGNLSSASAGSSSQTKGPTLTAAKKPLAKTPLA). A phosphoserine mark is found at Ser-879 and Ser-881. The span at 917–927 (SQSSSNGNTPT) shows a compositional bias: polar residues. Composition is skewed to low complexity over residues 957 to 973 (SSSA…SSSS) and 1001 to 1012 (GSGSSSPSSSGS). The span at 1019–1030 (TRSQVGSGQALA) shows a compositional bias: polar residues. A compositionally biased stretch (low complexity) spans 1042–1068 (SQHSQHLSSSECSSSSGGCTAVCSSSS). Basic and acidic residues predominate over residues 1073–1090 (EGRREKERERKPKSDKNK). Over residues 1130-1140 (QPPPPQAPPAA) the composition is skewed to pro residues. Polar residues predominate over residues 1198–1213 (PAQQNGHLTPKDQATN). Basic and acidic residues-rich tracts occupy residues 1234–1251 (EHPV…EAKF) and 1260–1288 (FQLK…EQPP). Residue Ser-1368 is modified to Phosphoserine. At Thr-1370 the chain carries Phosphothreonine. Over residues 1569 to 1589 (GNTPSSISPSNSVGSQGSGSN) the composition is skewed to low complexity. The interval 1569–1594 (GNTPSSISPSNSVGSQGSGSNTPPGR) is disordered.

This sequence belongs to the AF4 family.

The protein resides in the nucleus. Functionally, has a role in transcriptional regulation. Acts in parallel with the Ras/MAPK and the PI3K/PKB pathways in the control of cell identity and cellular growth. Essential for regulation of the cytoskeleton and cell growth but not for cell proliferation or growth rate. Required specifically for the microtubule-based basal transport of lipid droplets. Plays a partially redundant function downstream of Raf in cell fate specification in the developing eye. Pair-rule protein that regulates embryonic cellularization, gastrulation and segmentation. The polypeptide is AF4/FMR2 family member lilli (Drosophila erecta (Fruit fly)).